A 115-amino-acid chain; its full sequence is Small ribosomal subunit protein bS16 (115 aa).

Positions 81 to 115 (GLAPKPTYNEQPKKSAPKAKAQERAKAAADAAAAA) are disordered.

The protein belongs to the bacterial ribosomal protein bS16 family.

This is Small ribosomal subunit protein bS16 from Gluconobacter oxydans (strain 621H) (Gluconobacter suboxydans).